Here is a 429-residue protein sequence, read N- to C-terminus: Nucleotide exchange factor Sil1 (429 aa).

The first 24 residues, 1–24 (MSGKQVVILLGSVLILGCLQVAAA), serve as a signal peptide directing secretion. N29 carries N-linked (GlcNAc...) asparagine glycosylation. Residues 70-98 (DESERGTSLQSQPDDQNARESHDDNEPLA) are disordered. The segment covering 75 to 84 (GTSLQSQPDD) has biased composition (polar residues). The segment covering 85 to 94 (QNARESHDDN) has biased composition (basic and acidic residues). A coiled-coil region spans residues 104–135 (DIIEESIRRVKEQKKSYAELRKAYKEFQKNFR). Residues N150, N199, and N400 are each glycosylated (N-linked (GlcNAc...) asparagine). The short motif at 426-429 (HTEL) is the Prevents secretion from ER element.

It belongs to the SIL1 family.

The protein resides in the endoplasmic reticulum lumen. Functionally, required for protein translocation and folding in the endoplasmic reticulum (ER). Functions as a nucleotide exchange factor for an ER lumenal chaperone of HSP70 family. This chain is Nucleotide exchange factor Sil1, found in Drosophila melanogaster (Fruit fly).